Here is a 126-residue protein sequence, read N- to C-terminus: Large ribosomal subunit protein bL12 (126 aa).

Belongs to the bacterial ribosomal protein bL12 family. In terms of assembly, homodimer. Part of the ribosomal stalk of the 50S ribosomal subunit. Forms a multimeric L10(L12)X complex, where L10 forms an elongated spine to which 2 to 4 L12 dimers bind in a sequential fashion. Binds GTP-bound translation factors.

Functionally, forms part of the ribosomal stalk which helps the ribosome interact with GTP-bound translation factors. Is thus essential for accurate translation. The polypeptide is Large ribosomal subunit protein bL12 (Bordetella petrii (strain ATCC BAA-461 / DSM 12804 / CCUG 43448)).